A 203-amino-acid polypeptide reads, in one-letter code: Outer-membrane lipoprotein carrier protein (203 aa).

Residues 1–21 (MKKIAITCALLSSLVASSVWA) form the signal peptide.

The protein belongs to the LolA family. As to quaternary structure, monomer.

The protein localises to the periplasm. In terms of biological role, participates in the translocation of lipoproteins from the inner membrane to the outer membrane. Only forms a complex with a lipoprotein if the residue after the N-terminal Cys is not an aspartate (The Asp acts as a targeting signal to indicate that the lipoprotein should stay in the inner membrane). This is Outer-membrane lipoprotein carrier protein from Escherichia coli O139:H28 (strain E24377A / ETEC).